The sequence spans 275 residues: Elongation factor Ts (275 aa).

The tract at residues 76–79 (TDFV) is involved in Mg(2+) ion dislocation from EF-Tu.

It belongs to the EF-Ts family.

Its subcellular location is the cytoplasm. Associates with the EF-Tu.GDP complex and induces the exchange of GDP to GTP. It remains bound to the aminoacyl-tRNA.EF-Tu.GTP complex up to the GTP hydrolysis stage on the ribosome. This Rhodococcus erythropolis (strain PR4 / NBRC 100887) protein is Elongation factor Ts.